A 528-amino-acid polypeptide reads, in one-letter code: G protein-coupled receptor 161 (528 aa).

At 1–30 (MSLNSSLGHRKELSNLTEGASDQGGSGVTE) the chain is on the extracellular side. Residues N4 and N15 are each glycosylated (N-linked (GlcNAc...) asparagine). The helical transmembrane segment at 31-51 (FVAIVIITVFVCLGNLVIVIT) threads the bilayer. Residues 52–64 (LYRKSYLLTLSNK) lie on the Cytoplasmic side of the membrane. Residues 65-85 (FVFSLTLSNFLLSVLVLPFVV) form a helical membrane-spanning segment. The Extracellular portion of the chain corresponds to 86–101 (TSSIRREWIFGVVWCN). A disulfide bridge links C100 with C178. A glycan (N-linked (GlcNAc...) asparagine) is linked at N101. A helical membrane pass occupies residues 102–122 (FSALLYLLISSASMLTLGIIA). Residues 123 to 143 (VDRYYAVLYPMAYPMKITGNR) lie on the Cytoplasmic side of the membrane. The chain crosses the membrane as a helical span at residues 144-164 (AVMVLAYIWLHSLIGCLPPLF). Topologically, residues 165-190 (GWSSVEFDEFKWMCVAAWHREPGYTA) are extracellular. A helical membrane pass occupies residues 191-211 (FWQIWCALLPFLVMLVCYGFI). Residues 212-269 (FRVARVKARKVHCGAVVTVEVGVQRTGRKNSSTSTSSSGSRKSAFQGVVYSANQCKAL) lie on the Cytoplasmic side of the membrane. The chain crosses the membrane as a helical span at residues 270-290 (VTILVVIGAFMVTWGPYMVVI). The Extracellular portion of the chain corresponds to 291 to 306 (TSEALWGKNCVSPTLE). A helical membrane pass occupies residues 307 to 327 (TWATWLSFTSAICHPLIYGLW). Residues 328–528 (NKTVRKELLG…EGDVLATEQR (201 aa)) lie on the Cytoplasmic side of the membrane.

It belongs to the G-protein coupled receptor 1 family.

It is found in the cell projection. The protein localises to the cilium membrane. It localises to the cell membrane. Its function is as follows. Key negative regulator of Shh signaling, which promotes the processing of GLI3 into GLI3R during neural tube development. Recruited by TULP3 and the IFT-A complex to primary cilia and acts as a regulator of the PKA-dependent basal repression machinery in Shh signaling by increasing cAMP levels, leading to promote the PKA-dependent processing of GLI3 into GLI3R and repress the Shh signaling. In presence of SHH, it is removed from primary cilia and is internalized into recycling endosomes, preventing its activity and allowing activation of the Shh signaling. Its ligand is unknown. This chain is G protein-coupled receptor 161 (GPR161), found in Bos taurus (Bovine).